Here is a 337-residue protein sequence, read N- to C-terminus: Phosphate acyltransferase (337 aa).

It belongs to the PlsX family. As to quaternary structure, homodimer. Probably interacts with PlsY.

The protein resides in the cytoplasm. The catalysed reaction is a fatty acyl-[ACP] + phosphate = an acyl phosphate + holo-[ACP]. It participates in lipid metabolism; phospholipid metabolism. In terms of biological role, catalyzes the reversible formation of acyl-phosphate (acyl-PO(4)) from acyl-[acyl-carrier-protein] (acyl-ACP). This enzyme utilizes acyl-ACP as fatty acyl donor, but not acyl-CoA. The sequence is that of Phosphate acyltransferase from Aquifex aeolicus (strain VF5).